The primary structure comprises 50 residues: Protein HokE (50 aa).

A helical membrane pass occupies residues 5–25; that stretch reads YALVAVIVLCLTVLGFTLLVG.

It belongs to the Hok/Gef family.

The protein resides in the cell inner membrane. Functionally, toxic component of a type I toxin-antitoxin (TA) system. When overexpressed kills cells within minutes; causes collapse of the transmembrane potential and arrest of respiration. Its toxic effect is probably neutralized by an antisense antitoxin Sok RNA. In Escherichia coli O157:H7, this protein is Protein HokE (hokE).